The sequence spans 395 residues: Argininosuccinate synthase (395 aa).

8 to 16 (AYSGGLDTS) provides a ligand contact to ATP. Tyrosine 86 contacts L-citrulline. Residue glycine 116 coordinates ATP. The L-aspartate site is built by threonine 118, asparagine 122, and aspartate 123. Asparagine 122 provides a ligand contact to L-citrulline. L-citrulline-binding residues include arginine 126, serine 173, serine 182, glutamate 257, and tyrosine 269.

The protein belongs to the argininosuccinate synthase family. Type 1 subfamily. As to quaternary structure, homotetramer.

The protein resides in the cytoplasm. The enzyme catalyses L-citrulline + L-aspartate + ATP = 2-(N(omega)-L-arginino)succinate + AMP + diphosphate + H(+). Its pathway is amino-acid biosynthesis; L-arginine biosynthesis; L-arginine from L-ornithine and carbamoyl phosphate: step 2/3. In Methanocaldococcus jannaschii (strain ATCC 43067 / DSM 2661 / JAL-1 / JCM 10045 / NBRC 100440) (Methanococcus jannaschii), this protein is Argininosuccinate synthase.